The following is a 232-amino-acid chain: Ion-translocating oxidoreductase complex subunit E (232 aa).

6 helical membrane passes run 18-38 (GLVQLLGLCPLLAVTATLTNA), 39-59 (LGLGVATMLVLIGSNILVSLV), 69-89 (IPVFVMIIAALVTAVQLLINA), 93-113 (GLYLSLGIFLPLIVTNCIIIG), 127-147 (AAFDGLMMGLGFTLVLAVLGA), and 182-202 (PFLLAMLPPGAFIVMGLLIAL).

The protein belongs to the NqrDE/RnfAE family. As to quaternary structure, the complex is composed of six subunits: RnfA, RnfB, RnfC, RnfD, RnfE and RnfG.

The protein resides in the cell inner membrane. Part of a membrane-bound complex that couples electron transfer with translocation of ions across the membrane. The protein is Ion-translocating oxidoreductase complex subunit E of Shewanella sp. (strain MR-4).